We begin with the raw amino-acid sequence, 285 residues long: Bifunctional protein FolD (285 aa).

Residues glycine 165–serine 167 and serine 190 contribute to the NADP(+) site.

It belongs to the tetrahydrofolate dehydrogenase/cyclohydrolase family. As to quaternary structure, homodimer.

The enzyme catalyses (6R)-5,10-methylene-5,6,7,8-tetrahydrofolate + NADP(+) = (6R)-5,10-methenyltetrahydrofolate + NADPH. It catalyses the reaction (6R)-5,10-methenyltetrahydrofolate + H2O = (6R)-10-formyltetrahydrofolate + H(+). It participates in one-carbon metabolism; tetrahydrofolate interconversion. In terms of biological role, catalyzes the oxidation of 5,10-methylenetetrahydrofolate to 5,10-methenyltetrahydrofolate and then the hydrolysis of 5,10-methenyltetrahydrofolate to 10-formyltetrahydrofolate. The sequence is that of Bifunctional protein FolD from Staphylococcus saprophyticus subsp. saprophyticus (strain ATCC 15305 / DSM 20229 / NCIMB 8711 / NCTC 7292 / S-41).